The chain runs to 893 residues: TBC domain-containing protein kinase-like protein (893 aa).

Positions 1 to 274 (MFPLRDTEMG…EELMHDHLFS (274 aa)) constitute a Protein kinase domain. Residues 466 to 651 (DIPPLLRGIT…HLWDTLLLGN (186 aa)) form the Rab-GAP TBC domain. A Rhodanese domain is found at 790–889 (SKPKLLVVDI…IKPTGLLTVP (100 aa)).

It belongs to the protein kinase superfamily. In terms of assembly, component of the FERRY complex.

The protein resides in the cytoplasm. It is found in the cytoskeleton. Its subcellular location is the spindle. The protein localises to the midbody. It localises to the early endosome. Its function is as follows. Component of the FERRY complex (Five-subunit Endosomal Rab5 and RNA/ribosome intermediary). The FERRY complex directly interacts with mRNAs and RAB5A, and functions as a RAB5A effector involved in the localization and the distribution of specific mRNAs most likely by mediating their endosomal transport. The complex recruits mRNAs and ribosomes to early endosomes through direct mRNA-interaction. Also involved in the modulation of mTOR signaling and expression of mTOR complex components. Involved in the control of actin-cytoskeleton organization. In Gallus gallus (Chicken), this protein is TBC domain-containing protein kinase-like protein.